Consider the following 128-residue polypeptide: Holo-[acyl-carrier-protein] synthase (128 aa).

Residues Asp8 and Glu57 each contribute to the Mg(2+) site.

This sequence belongs to the P-Pant transferase superfamily. AcpS family. Requires Mg(2+) as cofactor.

The protein localises to the cytoplasm. The enzyme catalyses apo-[ACP] + CoA = holo-[ACP] + adenosine 3',5'-bisphosphate + H(+). In terms of biological role, transfers the 4'-phosphopantetheine moiety from coenzyme A to a Ser of acyl-carrier-protein. In Syntrophus aciditrophicus (strain SB), this protein is Holo-[acyl-carrier-protein] synthase.